A 552-amino-acid polypeptide reads, in one-letter code: Membrane protein insertase YidC (552 aa).

A helical membrane pass occupies residues 6-26; the sequence is NLLLAAIAAVILMLFIRWNHF. Polar residues-rich tracts occupy residues 32 to 41 and 60 to 70; these read QHQAGNTPAG and PTASDTPQATA. Residues 32–70 form a disordered region; the sequence is QHQAGNTPAGSSIAAIAPDSNGDIPSAVPTASDTPQATA. A run of 4 helical transmembrane segments spans residues 365 to 387, 431 to 451, 472 to 492, and 508 to 528; these read WGLA…SAAS, FGGC…YWVL, MDPY…MQKL, and LPFV…LYWV.

The protein belongs to the OXA1/ALB3/YidC family. Type 1 subfamily. In terms of assembly, interacts with the Sec translocase complex via SecD. Specifically interacts with transmembrane segments of nascent integral membrane proteins during membrane integration.

The protein localises to the cell inner membrane. Required for the insertion and/or proper folding and/or complex formation of integral membrane proteins into the membrane. Involved in integration of membrane proteins that insert both dependently and independently of the Sec translocase complex, as well as at least some lipoproteins. Aids folding of multispanning membrane proteins. The chain is Membrane protein insertase YidC from Cellvibrio japonicus (strain Ueda107) (Pseudomonas fluorescens subsp. cellulosa).